A 149-amino-acid polypeptide reads, in one-letter code: Large ribosomal subunit protein bL9 (149 aa).

This sequence belongs to the bacterial ribosomal protein bL9 family.

Its function is as follows. Binds to the 23S rRNA. In Fusobacterium nucleatum subsp. nucleatum (strain ATCC 25586 / DSM 15643 / BCRC 10681 / CIP 101130 / JCM 8532 / KCTC 2640 / LMG 13131 / VPI 4355), this protein is Large ribosomal subunit protein bL9.